A 363-amino-acid chain; its full sequence is tRNA/tmRNA (uracil-C(5))-methyltransferase (363 aa).

S-adenosyl-L-methionine contacts are provided by Gln187, Tyr215, Asn220, Glu236, and Asp296. Residue Cys321 is the Nucleophile of the active site. The active-site Proton acceptor is the Glu355.

This sequence belongs to the class I-like SAM-binding methyltransferase superfamily. RNA M5U methyltransferase family. TrmA subfamily.

It catalyses the reaction uridine(54) in tRNA + S-adenosyl-L-methionine = 5-methyluridine(54) in tRNA + S-adenosyl-L-homocysteine + H(+). It carries out the reaction uridine(341) in tmRNA + S-adenosyl-L-methionine = 5-methyluridine(341) in tmRNA + S-adenosyl-L-homocysteine + H(+). Its function is as follows. Dual-specificity methyltransferase that catalyzes the formation of 5-methyluridine at position 54 (m5U54) in all tRNAs, and that of position 341 (m5U341) in tmRNA (transfer-mRNA). The sequence is that of tRNA/tmRNA (uracil-C(5))-methyltransferase from Haemophilus influenzae (strain 86-028NP).